Reading from the N-terminus, the 229-residue chain is Aquaporin Z (229 aa).

The next 2 helical transmembrane spans lie at 8–28 (FFGTFWLVLGGCGSAVLAAGV) and 33–53 (IGYLGVALAFGLSVLTMAYAI). An NPA 1 motif is present at residues 62-64 (NPA). 3 helical membrane passes run 81-101 (LPYVVAQVLGGLAAGGVLYLI), 131-151 (AALVSEVVLTGMFLLIILGAT), and 158-178 (GFAPIAIGLTLTLIHLISIPV). The NPA 2 motif lies at 184–186 (NPA). The helical transmembrane segment at 199–219 (AVSQLWLFWVAPILGAVLGAL) threads the bilayer.

This sequence belongs to the MIP/aquaporin (TC 1.A.8) family. In terms of assembly, homotetramer.

Its subcellular location is the cell inner membrane. It carries out the reaction H2O(in) = H2O(out). Channel that permits osmotically driven movement of water in both directions. It is involved in the osmoregulation and in the maintenance of cell turgor during volume expansion in rapidly growing cells. It mediates rapid entry or exit of water in response to abrupt changes in osmolarity. This chain is Aquaporin Z, found in Pseudomonas aeruginosa (strain ATCC 15692 / DSM 22644 / CIP 104116 / JCM 14847 / LMG 12228 / 1C / PRS 101 / PAO1).